The sequence spans 63 residues: Large ribosomal subunit protein uL29 (63 aa).

This sequence belongs to the universal ribosomal protein uL29 family.

This Actinobacillus succinogenes (strain ATCC 55618 / DSM 22257 / CCUG 43843 / 130Z) protein is Large ribosomal subunit protein uL29.